We begin with the raw amino-acid sequence, 322 residues long: Putative T-box protein 11 (322 aa).

A DNA-binding region (T-box) is located at residues 16 to 185; the sequence is LWRSCHEYDN…NNPYSTGSRK (170 aa). A compositionally biased stretch (polar residues) spans 171 to 182; that stretch reads TLKTNNNPYSTG. Positions 171–214 are disordered; the sequence is TLKTNNNPYSTGSRKDRRRERQSPVYSEGTSSEKSISPPPAKKI.

The protein localises to the nucleus. This chain is Putative T-box protein 11 (tbx-11), found in Caenorhabditis elegans.